A 21-amino-acid polypeptide reads, in one-letter code: Nigrocin-2 (21 aa).

Cys-15 and Cys-21 form a disulfide bridge.

Expressed by the skin dorsal glands.

The protein resides in the secreted. Functionally, thanks to its single linear amphipathic alpha-helix, may integrate into membrane phospholipids, leading to lysis of the membrane. Shows antibacterial activity against both Gram-positive and Gram-negative bacteria and against the fungus C.albicans. Has no hemolytic activity. This Pelophylax nigromaculatus (Black-spotted frog) protein is Nigrocin-2.